The sequence spans 243 residues: Homeobox protein goosecoid isoform B (243 aa).

A DNA-binding region (homeobox) is located at residues 148 to 207; the sequence is KRRHRTIFTDEQLEALENLFQETKYPDVGTREQLARRVHLREEKVEVWFKNRRAKWRRQK. A disordered region spans residues 201–243; that stretch reads AKWRRQKRSSSEESENAQKWNKSSKNSAEKRDEQAKSDLDSDS. Over residues 217-226 the composition is skewed to polar residues; sequence AQKWNKSSKN. Residues 227 to 243 are compositionally biased toward basic and acidic residues; sequence SAEKRDEQAKSDLDSDS.

The protein belongs to the paired homeobox family. Bicoid subfamily.

Its subcellular location is the nucleus. In terms of biological role, plays a central role in executing Spemann's organizer phenomenon (the dorsal blastopore lip of the early Xenopus laevis gastrula can organize a complete secondary body axis when transplanted to another embryo). This Xenopus laevis (African clawed frog) protein is Homeobox protein goosecoid isoform B (gsc-b).